The chain runs to 275 residues: 2,3,4,5-tetrahydropyridine-2,6-dicarboxylate N-succinyltransferase (275 aa).

Positions 108 and 145 each coordinate substrate.

Belongs to the transferase hexapeptide repeat family. Homotrimer.

It localises to the cytoplasm. It carries out the reaction (S)-2,3,4,5-tetrahydrodipicolinate + succinyl-CoA + H2O = (S)-2-succinylamino-6-oxoheptanedioate + CoA. Its pathway is amino-acid biosynthesis; L-lysine biosynthesis via DAP pathway; LL-2,6-diaminopimelate from (S)-tetrahydrodipicolinate (succinylase route): step 1/3. The protein is 2,3,4,5-tetrahydropyridine-2,6-dicarboxylate N-succinyltransferase of Jannaschia sp. (strain CCS1).